Reading from the N-terminus, the 2439-residue chain is Mucin-6 (2439 aa).

The signal sequence occupies residues 1-22 (MVQRWLLLSCCGALLSAGLANT). Positions 43 to 214 (GQCSTWGAGH…KLDDPGEICT (172 aa)) constitute a VWFD 1 domain. Cystine bridges form between C45-C176 and C67-C213. N268 carries an N-linked (GlcNAc...) asparagine glycan. One can recognise a TIL domain in the interval 302–357 (CPANQVYQECGSACVKTCSNPQHSCSSSCTFGCFCPEGTVLNDLSNNHTCVPVTQC). The VWFD 2 domain occupies 395–579 (GHCSLEGGSF…ALERETDPCS (185 aa)). Disulfide bonds link C397-C533 and C419-C578. Residues N486 and N659 are each glycosylated (N-linked (GlcNAc...) asparagine). One can recognise a VWFD 3 domain in the interval 866-1038 (STCTLYGEGH…NSWKESPLCG (173 aa)). 4 disulfide bridges follow: C868–C1002, C890–C1037, C899–C999, and C917–C924. N975 and N1179 each carry an N-linked (GlcNAc...) asparagine glycan. Disordered stretches follow at residues 1202-1455 (PQPP…TSLV), 1471-1626 (ATSA…LVTP), 1642-1834 (SASI…HPHT), 1868-1983 (SIHS…STGP), 2033-2077 (ATSA…THSS), 2090-2196 (SSSW…SASP), 2233-2278 (VSPT…SLTT), and 2323-2348 (LTAH…SPGV). A compositionally biased stretch (low complexity) spans 1224–1265 (TGTSTTIGLLSSTGPSPSSNHTPASPTQTPLLPATLTSSKPT). The segment covering 1276–1286 (TAVTPQATSGL) has biased composition (polar residues). Low complexity predominate over residues 1294–1339 (STATKPTVTQATTRATASTASPATTSTAQSTTRTTMTLPTPATSGT). Residues 1340–1351 (SPTLPKSTNQEL) show a composition bias toward polar residues. Composition is skewed to low complexity over residues 1352–1373 (PGTT…TGPT) and 1381–1415 (TRPT…AGSP). Polar residues-rich tracts occupy residues 1416–1455 (VPST…TSLV), 1471–1481 (ATSASNHSAPT), and 1490–1520 (LKAT…STNK). 2 stretches are compositionally biased toward low complexity: residues 1521-1567 (TPTS…ATSS) and 1574-1611 (TTHS…PQTT). The stretch at 1561–1738 (TNSATSSRPP…TTSGTSQSRS (178 aa)) is one 1; truncated repeat. The segment at 1607–1953 (HPQTTLPTHV…STGTRTPVAH (347 aa)) is approximate repeats. Polar residues predominate over residues 1659-1686 (LKATGSTHTAPTMTLTTSGTSQALSSLN). Residues 1687–1768 (TAKTSTSLHS…PEVTSTSTTS (82 aa)) are compositionally biased toward low complexity. Positions 1769 to 1793 (ITPNHTSTGTRTPVAHTTSATSSRL) are enriched in polar residues. The stretch at 1785-1953 (TTSATSSRLP…STGTRTPVAH (169 aa)) is repeat 2. 2 stretches are compositionally biased toward low complexity: residues 1794-1834 (PTPF…HPHT) and 1891-1917 (TAPP…TSTS). The segment covering 1918 to 1962 (LPYHTSSTHHPEVTPTSTTNITPKHTSTGTRTPVAHTTSASSSRL) has biased composition (polar residues). Positions 1963–1983 (PTPFTTHSPPTGSSPFSSTGP) are enriched in low complexity. Residues 2052-2070 (LKATGSTHTAPPMTVTTSG) show a composition bias toward polar residues. A compositionally biased stretch (low complexity) spans 2090–2102 (SSSWLPQNSSSRP). Positions 2107-2120 (ITTQLPHLSSATTP) are enriched in polar residues. Residues 2121–2196 (VSTTNQLSSS…PTTASVSASP (76 aa)) show a composition bias toward low complexity. Residues 2240–2264 (HLASSTIAFPSTPRTTASTHTAPAF) are compositionally biased toward polar residues. Residues 2265 to 2278 (SSQSTTSRSTSLTT) are compositionally biased toward low complexity. Polar residues predominate over residues 2323-2347 (LTAHGSTPASAPVSSLGTPTPTSPG). 4 disulfides stabilise this stretch: C2349–C2396, C2363–C2410, C2372–C2430, and C2376–C2432. The CTCK domain maps to 2349–2438 (CSVREQQEEI…HCVCSSVACG (90 aa)).

In terms of assembly, multimer; disulfide-linked. In terms of processing, O-glycosylated. Expressed in the regenerative zone of gastric antrum, gastric body mucosa and gastric incisura mucosa. Expressed in the deeper mucous glands of gastric antrum. Overexpressed in Helicobacter pylori infected gastric epithelium. Highly expressed in duodenal Brunner's glands, gall bladder, seminal vesicle, pancreatic centroacinar cells and ducts, and periductal glands of the common bile duct.

It localises to the secreted. In terms of biological role, may provide a mechanism for modulation of the composition of the protective mucus layer related to acid secretion or the presence of bacteria and noxious agents in the lumen. Plays an important role in the cytoprotection of epithelial surfaces and are used as tumor markers in a variety of cancers. May play a role in epithelial organogenesis. This Homo sapiens (Human) protein is Mucin-6 (MUC6).